Here is a 446-residue protein sequence, read N- to C-terminus: Exodeoxyribonuclease 7 large subunit (446 aa).

It belongs to the XseA family. In terms of assembly, heterooligomer composed of large and small subunits.

The protein localises to the cytoplasm. The enzyme catalyses Exonucleolytic cleavage in either 5'- to 3'- or 3'- to 5'-direction to yield nucleoside 5'-phosphates.. Bidirectionally degrades single-stranded DNA into large acid-insoluble oligonucleotides, which are then degraded further into small acid-soluble oligonucleotides. This Vibrio cholerae serotype O1 (strain ATCC 39315 / El Tor Inaba N16961) protein is Exodeoxyribonuclease 7 large subunit.